Consider the following 323-residue polypeptide: HPr kinase/phosphorylase (323 aa).

Residues His142 and Lys163 contribute to the active site. ATP is bound at residue 157 to 164; the sequence is GESGVGKS. Ser164 contributes to the Mg(2+) binding site. The Proton acceptor; for phosphorylation activity. Proton donor; for dephosphorylation activity role is filled by Asp181. The important for the catalytic mechanism of both phosphorylation and dephosphorylation stretch occupies residues 205 to 214; the sequence is LEVRGLGMLN. Glu206 lines the Mg(2+) pocket. Arg249 is an active-site residue. The important for the catalytic mechanism of dephosphorylation stretch occupies residues 270-275; sequence PVAAGR.

It belongs to the HPrK/P family. Homohexamer. Mg(2+) serves as cofactor.

It carries out the reaction [HPr protein]-L-serine + ATP = [HPr protein]-O-phospho-L-serine + ADP + H(+). It catalyses the reaction [HPr protein]-O-phospho-L-serine + phosphate + H(+) = [HPr protein]-L-serine + diphosphate. Catalyzes the ATP- as well as the pyrophosphate-dependent phosphorylation of a specific serine residue in HPr, a phosphocarrier protein of the phosphoenolpyruvate-dependent sugar phosphotransferase system (PTS). HprK/P also catalyzes the pyrophosphate-producing, inorganic phosphate-dependent dephosphorylation (phosphorolysis) of seryl-phosphorylated HPr (P-Ser-HPr). The sequence is that of HPr kinase/phosphorylase from Nitrosomonas europaea (strain ATCC 19718 / CIP 103999 / KCTC 2705 / NBRC 14298).